The chain runs to 350 residues: Ion-translocating oxidoreductase complex subunit D (350 aa).

Transmembrane regions (helical) follow at residues 36–56 (CYFF…IAVA), 89–109 (IPAL…ILVV), and 124–144 (AMAA…TWVA). T185 carries the FMN phosphoryl threonine modification. The next 5 helical transmembrane spans lie at 212–232 (GFGI…LVML), 239–259 (WQIS…GYLL), 265–285 (MGPL…FIAT), 298–318 (LIFG…CGYP), and 319–339 (DAFA…DYYV).

Belongs to the NqrB/RnfD family. The complex is composed of six subunits: RnfA, RnfB, RnfC, RnfD, RnfE and RnfG. FMN serves as cofactor.

It is found in the cell inner membrane. Functionally, part of a membrane-bound complex that couples electron transfer with translocation of ions across the membrane. This chain is Ion-translocating oxidoreductase complex subunit D, found in Shewanella loihica (strain ATCC BAA-1088 / PV-4).